A 475-amino-acid polypeptide reads, in one-letter code: Cysteine--tRNA ligase (475 aa).

C28 provides a ligand contact to Zn(2+). The 'HIGH' region motif lies at 30–40; sequence PTVYDYAHIGN. Residues C213, H238, and E242 each coordinate Zn(2+). The 'KMSKS' region signature appears at 270 to 274; sequence KMSKS. K273 serves as a coordination point for ATP.

Belongs to the class-I aminoacyl-tRNA synthetase family. As to quaternary structure, monomer. Zn(2+) serves as cofactor.

The protein resides in the cytoplasm. It catalyses the reaction tRNA(Cys) + L-cysteine + ATP = L-cysteinyl-tRNA(Cys) + AMP + diphosphate. In Chlamydia muridarum (strain MoPn / Nigg), this protein is Cysteine--tRNA ligase (cysS).